A 115-amino-acid chain; its full sequence is MNLLMALFIDASLSLILISIAFWLPQLNIYTEKAGPYECGFDPLSSARLPFSMKFFLVAITFLLFDLEIALLLPLPWAIQIPKLSAMMVTSFILISVLALGLMYEWMNKGLEWTE.

The next 3 helical transmembrane spans lie at 3 to 23, 55 to 75, and 84 to 104; these read LLMA…IAFW, FFLV…LLPL, and LSAM…GLMY.

This sequence belongs to the complex I subunit 3 family. As to quaternary structure, core subunit of respiratory chain NADH dehydrogenase (Complex I) which is composed of 45 different subunits. Interacts with TMEM186. Interacts with TMEM242.

It localises to the mitochondrion inner membrane. The enzyme catalyses a ubiquinone + NADH + 5 H(+)(in) = a ubiquinol + NAD(+) + 4 H(+)(out). Functionally, core subunit of the mitochondrial membrane respiratory chain NADH dehydrogenase (Complex I) which catalyzes electron transfer from NADH through the respiratory chain, using ubiquinone as an electron acceptor. Essential for the catalytic activity of complex I. The chain is NADH-ubiquinone oxidoreductase chain 3 from Sigmodon ochrognathus (Yellow-nosed cotton rat).